A 166-amino-acid polypeptide reads, in one-letter code: Shikimate kinase (166 aa).

11–16 (GSGKST) contributes to the ATP binding site. Ser-15 is a binding site for Mg(2+). Residues Asp-33, Arg-57, and Gly-79 each contribute to the substrate site. An ATP-binding site is contributed by Arg-117. Arg-134 contributes to the substrate binding site.

It belongs to the shikimate kinase family. Monomer. Requires Mg(2+) as cofactor.

The protein localises to the cytoplasm. It carries out the reaction shikimate + ATP = 3-phosphoshikimate + ADP + H(+). The protein operates within metabolic intermediate biosynthesis; chorismate biosynthesis; chorismate from D-erythrose 4-phosphate and phosphoenolpyruvate: step 5/7. In terms of biological role, catalyzes the specific phosphorylation of the 3-hydroxyl group of shikimic acid using ATP as a cosubstrate. The protein is Shikimate kinase of Sulfurihydrogenibium sp. (strain YO3AOP1).